The following is a 506-amino-acid chain: Cobyric acid synthase (506 aa).

The GATase cobBQ-type domain maps to 251 to 448 (DITIAIVQLP…LHGLFDSDAF (198 aa)). Cys-332 serves as the catalytic Nucleophile. His-440 is an active-site residue.

This sequence belongs to the CobB/CobQ family. CobQ subfamily.

It functions in the pathway cofactor biosynthesis; adenosylcobalamin biosynthesis. Catalyzes amidations at positions B, D, E, and G on adenosylcobyrinic A,C-diamide. NH(2) groups are provided by glutamine, and one molecule of ATP is hydrogenolyzed for each amidation. The protein is Cobyric acid synthase of Salmonella arizonae (strain ATCC BAA-731 / CDC346-86 / RSK2980).